We begin with the raw amino-acid sequence, 118 residues long: Holo-[acyl-carrier-protein] synthase (118 aa).

Mg(2+) is bound by residues Asp9 and Glu52.

The protein belongs to the P-Pant transferase superfamily. AcpS family. Mg(2+) is required as a cofactor.

The protein localises to the cytoplasm. The catalysed reaction is apo-[ACP] + CoA = holo-[ACP] + adenosine 3',5'-bisphosphate + H(+). Its function is as follows. Transfers the 4'-phosphopantetheine moiety from coenzyme A to a Ser of acyl-carrier-protein. This is Holo-[acyl-carrier-protein] synthase from Frankia casuarinae (strain DSM 45818 / CECT 9043 / HFP020203 / CcI3).